We begin with the raw amino-acid sequence, 272 residues long: MEQIGLIGYGSMADMIARQLLKHEQIKENELFIETRTKGERLRALMSDYPNVSADPLENWANTCQLILICVPPLHVIETMRRLYPYVNRNTHIVSIAAGVPLRLLEAETEAGISRVIPAITSEAEAGISLVVHSEALAAEKKERLNELLSVFSRVREIKESNLDVASNLTSSAPGFIAAIFEELALSAVRNSSLSKEEAFDFLIHSLYGTGKMLIEKNMSFEETLERVATKGGITGEGAEVIHASVPDVFDEVFERTLRKYELLTEQVGKQT.

It belongs to the pyrroline-5-carboxylate reductase family.

The protein resides in the cytoplasm. The catalysed reaction is L-proline + NADP(+) = (S)-1-pyrroline-5-carboxylate + NADPH + 2 H(+). It carries out the reaction L-proline + NAD(+) = (S)-1-pyrroline-5-carboxylate + NADH + 2 H(+). Its pathway is amino-acid biosynthesis; L-proline biosynthesis; L-proline from L-glutamate 5-semialdehyde: step 1/1. In terms of biological role, catalyzes the reduction of 1-pyrroline-5-carboxylate (PCA) to L-proline. This chain is Pyrroline-5-carboxylate reductase 3 (proG), found in Bacillus subtilis (strain 168).